We begin with the raw amino-acid sequence, 182 residues long: Sperm acrosome-associated protein 7 (182 aa).

Residues 1 to 24 form the signal peptide; the sequence is MAANRGSRTFLSVFLLCCWQGAEL. A glycan (N-linked (GlcNAc...) asparagine) is linked at Asn40. The segment covering 112 to 140 has biased composition (basic and acidic residues); it reads LPTKEESGKNDRSTVANLHDHSSQTKHEP. The interval 112–154 is disordered; the sequence is LPTKEESGKNDRSTVANLHDHSSQTKHEPPSSPEGKGSSNDDV.

Testis-specific. Expressed in zygotene and pachytene spermatocytes, round spermatids, elongating spermatids and spermatozoa (at protein level). Testis-specific.

Its subcellular location is the secreted. The protein localises to the cytoplasmic vesicle. It is found in the secretory vesicle. It localises to the acrosome lumen. Its function is as follows. Involved in fertilization. Seems not to play a direct role in sperm-egg binding or gamete fusion. The polypeptide is Sperm acrosome-associated protein 7 (Mus musculus (Mouse)).